The primary structure comprises 322 residues: MHTSIVTLNLDAYQNFLANAIFCNLLLTMCLYWFSLIIVNNNLICNLAKFSAVNSNVILFFYLSWRWYNYNFFPLSNLYESLMFLSCLLLFIYQFIEFKTRSRVIGALVLPLIVLVQGFASLSLPTAMQKSSPLVPALQSNWLMLHVSMMMLSYATLLLGSLFSILYLVLYKDKKILTKKSIKEQFVEENFVFQLTTSAFSLNQTSNIITEAKTDRQRLILSLDNWSYRTIGIGFPFLTMGIISGAVWANEAWGSYWSWDPKETWALITWLIFASYLHARLTKGWRGKRAAFLGSFGFFIVWVCYLGVNFLGKGLHSYGFLN.

Helical transmembrane passes span 19–39 (NAIF…LIIV), 43–63 (LICN…FFYL), 72–92 (FFPL…LLFI), 104–124 (VIGA…SLSL), 150–170 (MMLS…YLVL), 230–250 (TIGI…VWAN), 264–281 (TWAL…HARL), and 291–311 (AFLG…VNFL).

This sequence belongs to the CcmF/CycK/Ccl1/NrfE/CcsA family. In terms of assembly, may interact with Ccs1.

The protein localises to the plastid. The protein resides in the chloroplast thylakoid membrane. Functionally, required during biogenesis of c-type cytochromes (cytochrome c6 and cytochrome f) at the step of heme attachment. In Heterosigma akashiwo (strain NIES-293 / 8280G21-1), this protein is Cytochrome c biogenesis protein CcsA.